We begin with the raw amino-acid sequence, 883 residues long: Phosphoenolpyruvate carboxylase (883 aa).

Active-site residues include H138 and K546.

This sequence belongs to the PEPCase type 1 family. Mg(2+) is required as a cofactor.

The catalysed reaction is oxaloacetate + phosphate = phosphoenolpyruvate + hydrogencarbonate. Functionally, forms oxaloacetate, a four-carbon dicarboxylic acid source for the tricarboxylic acid cycle. In Salmonella paratyphi A (strain ATCC 9150 / SARB42), this protein is Phosphoenolpyruvate carboxylase.